The sequence spans 40 residues: Photosystem II reaction center protein J (40 aa).

A helical membrane pass occupies residues 8 to 28 (IPLWLVALVAGTGVLVVVGLF).

It belongs to the PsbJ family. PSII is composed of 1 copy each of membrane proteins PsbA, PsbB, PsbC, PsbD, PsbE, PsbF, PsbH, PsbI, PsbJ, PsbK, PsbL, PsbM, PsbT, PsbX, PsbY, PsbZ, Psb30/Ycf12, peripheral proteins PsbO, CyanoQ (PsbQ), PsbU, PsbV and a large number of cofactors. It forms dimeric complexes.

It localises to the cellular thylakoid membrane. In terms of biological role, one of the components of the core complex of photosystem II (PSII). PSII is a light-driven water:plastoquinone oxidoreductase that uses light energy to abstract electrons from H(2)O, generating O(2) and a proton gradient subsequently used for ATP formation. It consists of a core antenna complex that captures photons, and an electron transfer chain that converts photonic excitation into a charge separation. In Trichodesmium erythraeum (strain IMS101), this protein is Photosystem II reaction center protein J.